A 366-amino-acid polypeptide reads, in one-letter code: Ribosomal RNA large subunit methyltransferase M (366 aa).

Residues serine 188, 221 to 224 (CPGG), aspartate 240, aspartate 260, and aspartate 277 each bind S-adenosyl-L-methionine. Lysine 306 (proton acceptor) is an active-site residue.

It belongs to the class I-like SAM-binding methyltransferase superfamily. RNA methyltransferase RlmE family. RlmM subfamily. As to quaternary structure, monomer.

The protein localises to the cytoplasm. It carries out the reaction cytidine(2498) in 23S rRNA + S-adenosyl-L-methionine = 2'-O-methylcytidine(2498) in 23S rRNA + S-adenosyl-L-homocysteine + H(+). Its function is as follows. Catalyzes the 2'-O-methylation at nucleotide C2498 in 23S rRNA. The polypeptide is Ribosomal RNA large subunit methyltransferase M (Salmonella dublin (strain CT_02021853)).